The primary structure comprises 488 residues: C2H2-type transcription factor MSN2 (488 aa).

2 C2H2-type zinc fingers span residues 376-399 and 405-427; these read FVCD…RSLH and FECN…ARTH.

The protein resides in the nucleus. It localises to the cytoplasm. Transcription factor that acts as a key downstream transcription factor in the HOG1-MAPK pathway. Plays crucial roles in the regulation of conidiation, virulence and multi-stress responses. Acts as a negative regulator of proteases, lipases, as well as of the red-pigmented oosporein production, and contributes to virulence and growth in response to external pH. Contributes to the ability to infect Rhipicephalus microplus (Acari, Ixodidae) via the cuticle-penetration requiring route involving proteolytic activity at the host cuticle. Does not seem to be involved in subsequent growth and proliferation once the tick cuticle has been breached. The sequence is that of C2H2-type transcription factor MSN2 from Beauveria bassiana (strain ARSEF 2860) (White muscardine disease fungus).